The primary structure comprises 445 residues: Zinc finger protein SHOOT GRAVITROPISM 5 (445 aa).

Positions 22–31 (SSSDPFLSSS) are enriched in low complexity. The tract at residues 22–59 (SSSDPFLSSSENGVTTTNTSTQKRKRRPAGTPDPDAEV) is disordered. The span at 32–42 (ENGVTTTNTST) shows a compositional bias: polar residues. 3 C2H2-type zinc fingers span residues 73 to 95 (YICEICNQGFQRDQNLQMHRRRH), 115 to 145 (YVCPEPTCLHHNPCHALGDLVGIKKHFRRKH), and 151 to 178 (WVCERCSKGYAVQSDYKAHLKTCGTRGH). C153, C156, H169, C173, C180, C182, H195, and C199 together coordinate Zn(2+). The CCHC-type 2; atypical zinc-finger motif lies at 178–201 (HSCDCGRVFSRVESFIEHQDNCSA). Positions 188–200 (RVESFIEHQDNCS) are SHR-binding. Disordered regions lie at residues 203–253 (RVHR…LEGR) and 281–314 (SSNQNPNQENQQQKVKEPSHHHNHNHDTTNLNLS). The segment covering 214-248 (TAVTVPACSSRTASTVSTPSSETNYGGTVAVTTPQ) has biased composition (polar residues). The span at 281-293 (SSNQNPNQENQQQ) shows a compositional bias: low complexity. Residues 340 to 397 (MKIAMKEKAYAEEAKREAKRQREIAENEFANAKKIRQKAQAELERAKFLKEQSMKKIS) adopt a coiled-coil conformation.

In terms of tissue distribution, mainly expressed in the endodermis, the gravity-sensing tissue in inflorescence stems. Mostly present in stems and flowers, and, to a lower extent, in seedlings, hypocotyls, roots and the shoot apical meristem (SAM).

Its subcellular location is the nucleus. Its function is as follows. Transcription factor involved in inflorescence stems gravitropism, probably by regulating starch accumulation in amyloplasts of graviperceptive cells. Required for stem circumnutation movements. Regulates lateral organ morphogenesis and gravitropic responses. Acts cooperatively with IDD16 to control silique and branche orientation. Involved in the establishment of auxin gradients through the regulation of auxin biosynthesis and transport. The sequence is that of Zinc finger protein SHOOT GRAVITROPISM 5 from Arabidopsis thaliana (Mouse-ear cress).